Reading from the N-terminus, the 437-residue chain is MMSVTVETLENLERKVVLSLPWSEINAETDKKLKQTQRRAKIDGFRPGKAPLKMIAQMYGASAQNDVINELVQRRFYDVAVAQELKVAGFPRFEGVEEQDDKESFKVAAIFEVFPEVVIGDLSAQEVEKVTASVGDAEVDQTVEILRKQRTRFNHVEREARNGDRVIIDFEGKIDGEPFAGGASKNYAFVLGASQMLPEFEAGVVGMKAGESKDVTVNFPEDYHGKDVAGKTAVFTITLNNVSEATLPEVDADFAKALGIADGDVAKMREEVQKNVSREVERRVNEQTKESVMNALLKAVELKAPVALVNEEAARLANEMKQNFVNQGMADAANLDLPLDMFKEQAERRVSLGLILAKLVDENKLEPTEEQIKAVVANFAESYEDPQEVIDWYYADPSRLQAPTSLAVESNVVDFVLGKAKVNEKALSFDEVMGAQA.

The region spanning 163 to 248 is the PPIase FKBP-type domain; it reads GDRVIIDFEG…LNNVSEATLP (86 aa).

Belongs to the FKBP-type PPIase family. Tig subfamily.

It is found in the cytoplasm. It carries out the reaction [protein]-peptidylproline (omega=180) = [protein]-peptidylproline (omega=0). Functionally, involved in protein export. Acts as a chaperone by maintaining the newly synthesized protein in an open conformation. Functions as a peptidyl-prolyl cis-trans isomerase. This Neisseria meningitidis serogroup B (strain ATCC BAA-335 / MC58) protein is Trigger factor (tig).